The chain runs to 477 residues: Glutamyl-tRNA(Gln) amidotransferase subunit A (477 aa).

Active-site charge relay system residues include K71 and S146. S170 serves as the catalytic Acyl-ester intermediate.

This sequence belongs to the amidase family. GatA subfamily. As to quaternary structure, heterotrimer of A, B and C subunits.

The catalysed reaction is L-glutamyl-tRNA(Gln) + L-glutamine + ATP + H2O = L-glutaminyl-tRNA(Gln) + L-glutamate + ADP + phosphate + H(+). Allows the formation of correctly charged Gln-tRNA(Gln) through the transamidation of misacylated Glu-tRNA(Gln) in organisms which lack glutaminyl-tRNA synthetase. The reaction takes place in the presence of glutamine and ATP through an activated gamma-phospho-Glu-tRNA(Gln). This Halothermothrix orenii (strain H 168 / OCM 544 / DSM 9562) protein is Glutamyl-tRNA(Gln) amidotransferase subunit A.